Reading from the N-terminus, the 469-residue chain is Protein C-ets-2 (469 aa).

In terms of domain architecture, PNT spans 85–170; the sequence is ATFSGFKKEQ…EHLEQMIKEN (86 aa). A phosphoserine mark is found at Ser220 and Ser225. Positions 264 to 289 are disordered; it reads NLLTNNSGTPKDHDSPENGADSFESS. A phosphoserine mark is found at Ser295, Ser298, and Ser301. A DNA-binding region (ETS) is located at residues 363–443; that stretch reads IQLWQFLLEL…SGKRYVYRFV (81 aa).

Belongs to the ETS family. Post-translationally, phosphorylation by CDK10 at Ser-220 and Ser-225 creates a phosphodegron that targets ETS2 for proteasomal degradation.

The protein resides in the nucleus. In terms of biological role, transcription factor activating transcription. Binds specifically the DNA GGAA/T core motif (Ets-binding site or EBS) in gene promoters and stimulates transcription. In Homo sapiens (Human), this protein is Protein C-ets-2 (ETS2).